Consider the following 930-residue polypeptide: MSDHHPLKEMSDSNSSPLLPEPLSSRYKLYESELSSPTWPSSSQDTHPALPLLEMPEEKDLRSSDEDSHIVKIEKPNERNKRRESEVSRRASAGRGGFSLFQAVSYLTGDMKECKNWLKDKPLVLQFLDWVLRGAAQVMFVNNPISGLIIFIGLLIQNPWWTIAGTLGTVASTLAALALSQDRSAIASGLHGYNGMLVGLLMAVFSEKLDYYWWLLFPVTFTSMACPIISSALSTIFAKWDLPVFTLPFNIALTLYLAATGHYNLFFPTTLIKPASAAPNITWTEIEMPLLLQTIPVGVGQVYGCDNPWTGGVILVALFISSPLICLHAAIGSIVGLLAALTVATPFETIYLGLWSYNCVLSCIAIGGMFYALTWQTHLLALVCALFCAYMGAALSNTMAVVGVPSGTWAFCLSTLTFLLLTSNNTGIYKLPLSKVTYPEANRIYFLTVRRSEEEKSPNGGSGEQSHGSGQWKAEESSETVLPRRRSVFHIEWSSIRRRSKVFGKGEHQERQTKEPLPCPYRKPTVELFDLDTMEESTEIKVEANTARTSWIQSSMVAGGKRVSKALSYITGEMKECGEGLKDKSPVFQFLDWVLRGMSQVMFVNNPLSGILIVLGLFVQNPWWAISGCLGTVMSTLTALILSQDKSAIAAGLHGYNGVLVGLLMAVFSDKGNYYWWLLLPVIVMSMTCPILSSALSTVFSKWDLPVFTLPFNIAVTLYLAATGHHNLFFPTTLLQPATTTPNITWSDIQVSLLLRAIPVGIGQVYGCDNPWTGGIFLVALFISSPLICLHAAIGSTIGMLAALSIATPFDSIYFGLCGFNSTLACIAIGGMFYVITWQTHLLAIACALFAAYLGAALANMLSVFGLPPCTWPFCLSALTFLLLTSNNPAIYKLPLSKVTYPEANRIYFLSQEKNRRASTITKYQAYDVS.

Residues 1 to 11 show a composition bias toward basic and acidic residues; that stretch reads MSDHHPLKEMS. Residues 1 to 90 are disordered; the sequence is MSDHHPLKEM…KRRESEVSRR (90 aa). Composition is skewed to low complexity over residues 12–25 and 32–43; these read DSNSSPLLPEPLSS and SELSSPTWPSSS. Over residues 56 to 89 the composition is skewed to basic and acidic residues; the sequence is PEEKDLRSSDEDSHIVKIEKPNERNKRRESEVSR. 8 helical membrane passes run 145–165, 185–205, 213–233, 242–262, 280–300, 311–331, 350–372, and 401–421; these read ISGLIIFIGLLIQNPWWTIAG, AIASGLHGYNGMLVGLLMAVF, WWLLFPVTFTSMACPIISSAL, LPVFTLPFNIALTLYLAATGH, NITWTEIEMPLLLQTIPVGVG, GGVILVALFISSPLICLHAAI, IYLGLWSYNCVLSCIAIGGMFYA, and VVGVPSGTWAFCLSTLTFLLL. The tract at residues 452 to 479 is disordered; sequence SEEEKSPNGGSGEQSHGSGQWKAEESSE. S487 carries the post-translational modification Phosphoserine. Helical transmembrane passes span 610 to 630, 648 to 668, 676 to 696, and 705 to 725; these read GILIVLGLFVQNPWWAISGCL, AIAAGLHGYNGVLVGLLMAVF, WWLLLPVIVMSMTCPILSSAL, and LPVFTLPFNIAVTLYLAATGH. The N-linked (GlcNAc...) asparagine glycan is linked to N743. 4 helical membrane-spanning segments follow: residues 774–794, 813–833, 842–862, and 864–884; these read GGIFLVALFISSPLICLHAAI, IYFGLCGFNSTLACIAIGGMF, LLAIACALFAAYLGAALANML, and VFGLPPCTWPFCLSALTFLLL.

This sequence belongs to the urea transporter family. In terms of tissue distribution, highly expressed in kidney medulla (at protein level). Also detected in testes, heart, brain and liver (at protein level). In the kidney, present in thin descending limbs of the loop of Henle and in the middle and terminal inner medullary collecting ducts. As to expression, expressed in the kidney medulla. Expressed in the peritubular myoid cells forming the outermost layer of the seminiferous tubules within the testes and is not detected in kidney. Expression levels are coordinated with the stage of testes development and increase 15 days postpartum, commensurate with the start of seminiferous tubule fluid movement.

The protein localises to the apical cell membrane. It is found in the basolateral cell membrane. It catalyses the reaction urea(in) = urea(out). Inhibited by phloretin. Activated by forskolin, 3-isobutyl-1-methylxanthine (IBMX) and cAMP. With respect to regulation, inhibited by phloretin. Its activity is regulated as follows. Inhibited by phloretin. Activated by forskolin, 3-isobutyl-1-methylxanthine (IBMX) and cAMP. Mediates the transport of urea driven by a concentration gradient across the cell membrane of the renal inner medullary collecting duct which is critical to the urinary concentrating mechanism. Its function is as follows. Mediates the transport of urea driven by a concentration gradient across the cell membrane. Implicated in the urea movement across the blood-testis barrier and does not translocate water. This chain is Urea transporter 2 (Slc14a2), found in Mus musculus (Mouse).